The primary structure comprises 342 residues: D-alanine--D-alanine ligase (342 aa).

The region spanning 132-326 is the ATP-grasp domain; it reads KLYAKECGIE…VAKHLPKSKN (195 aa). 159–210 contacts ATP; it reads EYPVIIKPNHLGSSIGVSVVYDSSELEYALDVAFEFDDEVLIEPFIEGIEEY. Residues Asp-282, Glu-294, and Asn-296 each coordinate Mg(2+).

It belongs to the D-alanine--D-alanine ligase family. It depends on Mg(2+) as a cofactor. Mn(2+) is required as a cofactor.

It is found in the cytoplasm. The enzyme catalyses 2 D-alanine + ATP = D-alanyl-D-alanine + ADP + phosphate + H(+). It participates in cell wall biogenesis; peptidoglycan biosynthesis. In terms of biological role, cell wall formation. This chain is D-alanine--D-alanine ligase, found in Nitratiruptor sp. (strain SB155-2).